A 229-amino-acid chain; its full sequence is uncharacterized protein (229 aa).

A coiled-coil region spans residues 66-94 (GHEKLQIQSALRDIESAENQARVQQCNAK).

This is an uncharacterized protein from Ostreid herpesvirus 1 (isolate France) (OsHV-1).